The primary structure comprises 364 residues: GMP reductase (364 aa).

NADP(+) contacts are provided by residues 26–27 (SR), Lys78, 132–134 (DVA), and 183–184 (IG). K(+)-binding residues include Gly184, Gly186, and Cys189. The active-site Thioimidate intermediate is the Cys189. Thr191 functions as the Proton donor/acceptor in the catalytic mechanism. Arg192 serves as a coordination point for K(+). Residues 222-224 (DGG), 245-246 (GG), 271-273 (GMS), and 289-293 (RASEG) each bind GMP. Residues Met272, 288–289 (YR), and 317–320 (SACT) contribute to the NADP(+) site.

This sequence belongs to the IMPDH/GMPR family. GuaC type 1 subfamily. As to quaternary structure, homotetramer.

The catalysed reaction is IMP + NH4(+) + NADP(+) = GMP + NADPH + 2 H(+). Functionally, catalyzes the irreversible NADPH-dependent deamination of GMP to IMP. It functions in the conversion of nucleobase, nucleoside and nucleotide derivatives of G to A nucleotides, and in maintaining the intracellular balance of A and G nucleotides. The sequence is that of GMP reductase (gmr-1) from Onchocerca volvulus.